Consider the following 751-residue polypeptide: Leucine-rich repeat-containing protein 56 homolog (751 aa).

Residues 1 to 149 (MKKSTVLDAR…IDKSRDNGQL (149 aa)) are disordered. Positions 13–22 (GPLPRRPQQP) are enriched in pro residues. Composition is skewed to polar residues over residues 28–39 (RNSSQVEKNNAR) and 60–87 (HSQS…NLNS). LRR repeat units follow at residues 210–235 (MPQL…NYAN), 236–256 (LRRL…GACA), 258–279 (VLEE…TEVS), 280–304 (STLQ…TLPQ), and 307–328 (KMKH…VELS). Disordered stretches follow at residues 430–538 (SRSH…QRQQ), 645–698 (TCTH…EKDW), and 717–751 (EAAL…PVVF). 2 stretches are compositionally biased toward polar residues: residues 456-471 (KNSQ…TNQG) and 662-671 (QQEQPTTAGA). Residues 717–738 (EAALKERVQGSKEVDGGGLEKV) are compositionally biased toward basic and acidic residues. A compositionally biased stretch (acidic residues) spans 739–751 (ESEDEEDVSPVVF).

This sequence belongs to the LRRC56 family.

Its subcellular location is the cell projection. It localises to the cilium. The protein localises to the flagellum. Its function is as follows. Required for the assembly of dynein arms in the distal portion of flagellum axoneme. This is Leucine-rich repeat-containing protein 56 homolog from Trypanosoma brucei brucei (strain 927/4 GUTat10.1).